Here is an 88-residue protein sequence, read N- to C-terminus: Small ribosomal subunit protein bS18B (88 aa).

It belongs to the bacterial ribosomal protein bS18 family. As to quaternary structure, part of the 30S ribosomal subunit. Forms a tight heterodimer with protein bS6.

Functionally, binds as a heterodimer with protein bS6 to the central domain of the 16S rRNA, where it helps stabilize the platform of the 30S subunit. This Roseiflexus castenholzii (strain DSM 13941 / HLO8) protein is Small ribosomal subunit protein bS18B.